A 560-amino-acid polypeptide reads, in one-letter code: uncharacterized protein (560 aa).

At 1-17 (MEPKRKSGSLAKHDLPQ) the chain is on the cytoplasmic side. Residues 18 to 38 (FYLLIMLYLAQGIPVGLAFGT) traverse the membrane as a helical segment. Residues 39 to 54 (VPFLLKSLAKETSFTS) lie on the Extracellular side of the membrane. The helical transmembrane segment at 55 to 75 (LGIFSMATYPYSLKIIWSPIV) threads the bilayer. Residues 76–88 (DSLYNKRIGRRRS) are Cytoplasmic-facing. A helical transmembrane segment spans residues 89-109 (WIIPVQFVSGFVLWALGWCIS). Topologically, residues 110 to 139 (QGIIFDGVDDAFHNRGNGTLHSVSIKNLTW) are extracellular. A helical transmembrane segment spans residues 140–160 (WFGLLVFLCATQDIAVDGWAL). Topologically, residues 161-172 (TILSKESLSYAS) are cytoplasmic. A helical transmembrane segment spans residues 173 to 193 (TAQTIGLNIGYFMSFTIFLSL). At 194–214 (NSSDFANKYFRNIPLDHGFIS) the chain is on the extracellular side. Residues 215-235 (LGGYMKFSGMLYIVITIYIIF) form a helical membrane-spanning segment. Residues 236-329 (CTKEKPYVEY…KLLEQGFKRE (94 aa)) lie on the Cytoplasmic side of the membrane. The chain crosses the membrane as a helical span at residues 330-350 (DLAVTVLIDLPFEIIFGYYVV). Over 351–374 (KWSSDKDPMIRDNRRLRNSTGTNK) the chain is Extracellular. A helical membrane pass occupies residues 375–395 (VIKFLVGDAGVLTPWLWGFLG). Topologically, residues 396 to 421 (RLAAAVLGSYVVKQFPKDGEISTGYF) are cytoplasmic. A helical transmembrane segment spans residues 422–442 (CLVIFQHLLGSFMNTVQFIGI). The Extracellular portion of the chain corresponds to 443 to 521 (SAFHTRVADP…LNGTVTILRD (79 aa)). The helical transmembrane segment at 522–542 (GYYITNLICIVVGLFLYFGYL) threads the bilayer. Residues 543–560 (KRKILHLQSLPISSWRCT) are Cytoplasmic-facing.

It is found in the membrane. This is an uncharacterized protein from Saccharomyces cerevisiae (strain ATCC 204508 / S288c) (Baker's yeast).